Reading from the N-terminus, the 360-residue chain is UDP-N-acetylglucosamine--N-acetylmuramyl-(pentapeptide) pyrophosphoryl-undecaprenol N-acetylglucosamine transferase (360 aa).

UDP-N-acetyl-alpha-D-glucosamine contacts are provided by residues 16 to 18, asparagine 128, arginine 165, serine 191, isoleucine 247, 266 to 271, and glutamine 292; these read TGG and ALTVSE.

This sequence belongs to the glycosyltransferase 28 family. MurG subfamily.

Its subcellular location is the cell inner membrane. It catalyses the reaction di-trans,octa-cis-undecaprenyl diphospho-N-acetyl-alpha-D-muramoyl-L-alanyl-D-glutamyl-meso-2,6-diaminopimeloyl-D-alanyl-D-alanine + UDP-N-acetyl-alpha-D-glucosamine = di-trans,octa-cis-undecaprenyl diphospho-[N-acetyl-alpha-D-glucosaminyl-(1-&gt;4)]-N-acetyl-alpha-D-muramoyl-L-alanyl-D-glutamyl-meso-2,6-diaminopimeloyl-D-alanyl-D-alanine + UDP + H(+). It functions in the pathway cell wall biogenesis; peptidoglycan biosynthesis. Cell wall formation. Catalyzes the transfer of a GlcNAc subunit on undecaprenyl-pyrophosphoryl-MurNAc-pentapeptide (lipid intermediate I) to form undecaprenyl-pyrophosphoryl-MurNAc-(pentapeptide)GlcNAc (lipid intermediate II). The chain is UDP-N-acetylglucosamine--N-acetylmuramyl-(pentapeptide) pyrophosphoryl-undecaprenol N-acetylglucosamine transferase from Shewanella amazonensis (strain ATCC BAA-1098 / SB2B).